We begin with the raw amino-acid sequence, 408 residues long: MSIVYLVSITFIFSVFKPITSCRVEECAAWFQKTKDYENLVPKATERYCQVLQTYLKCMNDTQRYCHGNLRFHSSELIMRRHWKEFECEKWESCNDNSHVKRKHVNTCYFNPPPSNRKLKYCSLFGDPHLIMFNGSVQTCSEEGARPLVDNRYFLVQVTNRNVRGEALTTTVTKVTVLVRKHNCTASLRYEASSDEEGLPRGFVDGTTFQMTSKHSVEVLWQDDNYVEIALHFIHSSIHIRRQGPYLSVSVRAPTIVLETGGDVARELCWSGCRKSSRIPAELAVEMTKKFAECYRRRVHVPKKVAEDRCKDIGNIGVFFDACVFDLMFTGDDYLVHLSRAAESDFRRLAPHHFQSHVTQQHARFQKENQHKNHINQSEIFKKCIPSKSIRFYPFLAIFFFALLSLLC.

The N-terminal stretch at M1–C22 is a signal peptide. Residues R23–S387 lie on the Extracellular side of the membrane. N-linked (GlcNAc...) asparagine glycosylation is found at N60, N134, N183, and N376. Residues K388–C408 form a helical membrane-spanning segment.

The protein belongs to the repulsive guidance molecule (RGM) family. In terms of assembly, interacts with unc-40 (via FN6 domain), dbl-1 and sma-6. Expressed in pharyngeal, hypodermal and intestinal cells.

Its subcellular location is the cell membrane. In terms of biological role, probably in association with the cell surface receptor unc-40, positively modulates the BMP-like Sma/Mab signaling pathway through interaction with both the ligand dbl-1 and its type I receptor sma-6. Regulates body size and this may be through modulation of the Sma/Mab signaling pathway. The chain is Repulsive guidance molecule B homolog drag-1 from Caenorhabditis elegans.